The sequence spans 122 residues: Small ribosomal subunit protein uS13 (122 aa).

Positions 95-122 (GLPVRGQRTKTNSRTRKGRRKTVANKKK) are disordered. Positions 101–122 (QRTKTNSRTRKGRRKTVANKKK) are enriched in basic residues.

Belongs to the universal ribosomal protein uS13 family. Part of the 30S ribosomal subunit. Forms a loose heterodimer with protein S19. Forms two bridges to the 50S subunit in the 70S ribosome.

Located at the top of the head of the 30S subunit, it contacts several helices of the 16S rRNA. In the 70S ribosome it contacts the 23S rRNA (bridge B1a) and protein L5 of the 50S subunit (bridge B1b), connecting the 2 subunits; these bridges are implicated in subunit movement. Contacts the tRNAs in the A and P-sites. This is Small ribosomal subunit protein uS13 from Protochlamydia amoebophila (strain UWE25).